The primary structure comprises 468 residues: 3-isopropylmalate dehydratase large subunit (468 aa).

The interval 53–74 (QPSKTVATMDHNVPTDSRDLAG) is disordered. [4Fe-4S] cluster contacts are provided by C347, C407, and C410.

It belongs to the aconitase/IPM isomerase family. LeuC type 1 subfamily. Heterodimer of LeuC and LeuD. Requires [4Fe-4S] cluster as cofactor.

It catalyses the reaction (2R,3S)-3-isopropylmalate = (2S)-2-isopropylmalate. The protein operates within amino-acid biosynthesis; L-leucine biosynthesis; L-leucine from 3-methyl-2-oxobutanoate: step 2/4. In terms of biological role, catalyzes the isomerization between 2-isopropylmalate and 3-isopropylmalate, via the formation of 2-isopropylmaleate. This Pasteurella multocida (strain Pm70) protein is 3-isopropylmalate dehydratase large subunit.